Here is a 123-residue protein sequence, read N- to C-terminus: Small ribosomal subunit protein uS12 (123 aa).

Asp89 carries the 3-methylthioaspartic acid modification.

It belongs to the universal ribosomal protein uS12 family. Part of the 30S ribosomal subunit. Contacts proteins S8 and S17. May interact with IF1 in the 30S initiation complex.

Functionally, with S4 and S5 plays an important role in translational accuracy. In terms of biological role, interacts with and stabilizes bases of the 16S rRNA that are involved in tRNA selection in the A site and with the mRNA backbone. Located at the interface of the 30S and 50S subunits, it traverses the body of the 30S subunit contacting proteins on the other side and probably holding the rRNA structure together. The combined cluster of proteins S8, S12 and S17 appears to hold together the shoulder and platform of the 30S subunit. This is Small ribosomal subunit protein uS12 from Rhodopseudomonas palustris (strain HaA2).